We begin with the raw amino-acid sequence, 342 residues long: Ferredoxin--NADP reductase (342 aa).

The FAD site is built by Cys17, Asp36, Gln44, Tyr49, Ile89, Phe124, Asp289, and Thr330.

The protein belongs to the ferredoxin--NADP reductase type 2 family. Homodimer. FAD is required as a cofactor.

The enzyme catalyses 2 reduced [2Fe-2S]-[ferredoxin] + NADP(+) + H(+) = 2 oxidized [2Fe-2S]-[ferredoxin] + NADPH. This Rhodopseudomonas palustris (strain HaA2) protein is Ferredoxin--NADP reductase.